The chain runs to 296 residues: Acetylglutamate kinase (296 aa).

Residues 69–70 (GG), Arg-91, and Asn-192 each bind substrate.

It belongs to the acetylglutamate kinase family. ArgB subfamily.

Its subcellular location is the cytoplasm. The enzyme catalyses N-acetyl-L-glutamate + ATP = N-acetyl-L-glutamyl 5-phosphate + ADP. The protein operates within amino-acid biosynthesis; L-arginine biosynthesis; N(2)-acetyl-L-ornithine from L-glutamate: step 2/4. Its function is as follows. Catalyzes the ATP-dependent phosphorylation of N-acetyl-L-glutamate. The protein is Acetylglutamate kinase of Ruthia magnifica subsp. Calyptogena magnifica.